The primary structure comprises 93 residues: YcgL domain-containing protein Swoo_2115 (93 aa).

The YcgL domain occupies 1–85; sequence MICAVYKSRR…PVVNLLEEHK (85 aa).

The sequence is that of YcgL domain-containing protein Swoo_2115 from Shewanella woodyi (strain ATCC 51908 / MS32).